We begin with the raw amino-acid sequence, 215 residues long: Probable GTP-binding protein EngB (215 aa).

The region spanning 31-215 (GPPEIAFAGR…RAAILQAIAV (185 aa)) is the EngB-type G domain. Residues 39–46 (GRSNVGKS), 66–70 (GRTQE), 93–96 (DMPG), 160–163 (TKSD), and 194–196 (TSS) contribute to the GTP site. 2 residues coordinate Mg(2+): Ser-46 and Thr-68.

This sequence belongs to the TRAFAC class TrmE-Era-EngA-EngB-Septin-like GTPase superfamily. EngB GTPase family. Mg(2+) is required as a cofactor.

Necessary for normal cell division and for the maintenance of normal septation. This Bartonella quintana (strain Toulouse) (Rochalimaea quintana) protein is Probable GTP-binding protein EngB.